A 452-amino-acid chain; its full sequence is Ribosomal protein uS12 methylthiotransferase RimO (452 aa).

In terms of domain architecture, MTTase N-terminal spans 5–116; that stretch reads PTIAFSHLGC…IVDVLQRTES (112 aa). Residues Cys-14, Cys-50, Cys-79, Cys-154, Cys-158, and Cys-161 each contribute to the [4Fe-4S] cluster site. Positions 140 to 369 constitute a Radical SAM core domain; sequence TTTSAVAYLR…MATQQPIAER (230 aa). Positions 372–438 constitute a TRAM domain; the sequence is RAQIGRLVDV…IYDLHGEVAS (67 aa).

The protein belongs to the methylthiotransferase family. RimO subfamily. [4Fe-4S] cluster serves as cofactor.

It is found in the cytoplasm. It carries out the reaction L-aspartate(89)-[ribosomal protein uS12]-hydrogen + (sulfur carrier)-SH + AH2 + 2 S-adenosyl-L-methionine = 3-methylsulfanyl-L-aspartate(89)-[ribosomal protein uS12]-hydrogen + (sulfur carrier)-H + 5'-deoxyadenosine + L-methionine + A + S-adenosyl-L-homocysteine + 2 H(+). Its function is as follows. Catalyzes the methylthiolation of an aspartic acid residue of ribosomal protein uS12. The sequence is that of Ribosomal protein uS12 methylthiotransferase RimO from Synechococcus elongatus (strain ATCC 33912 / PCC 7942 / FACHB-805) (Anacystis nidulans R2).